We begin with the raw amino-acid sequence, 182 residues long: Large ribosomal subunit protein uL6 (182 aa).

This sequence belongs to the universal ribosomal protein uL6 family. Part of the 50S ribosomal subunit.

This protein binds to the 23S rRNA, and is important in its secondary structure. It is located near the subunit interface in the base of the L7/L12 stalk, and near the tRNA binding site of the peptidyltransferase center. The polypeptide is Large ribosomal subunit protein uL6 (Nostoc sp. (strain PCC 7120 / SAG 25.82 / UTEX 2576)).